Consider the following 77-residue polypeptide: MKLIIFTGLVLFAIVSLIEAQAENEKACLPQYQVCTDAPGNCCSNLVCDCYGRYKSGTRIGRNCFCLQKGVIYKREN.

Residues 1-20 form the signal peptide; the sequence is MKLIIFTGLVLFAIVSLIEA. Positions 21–26 are excised as a propeptide; the sequence is QAENEK.

This sequence belongs to the neurotoxin 19 (CSTX) family. 08 (U8-Lctx) subfamily. Post-translationally, contains 4 disulfide bonds. In terms of tissue distribution, expressed by the venom gland.

The protein localises to the secreted. This chain is U8-lycotoxin-Ls1t, found in Lycosa singoriensis (Wolf spider).